The primary structure comprises 347 residues: CCN family member 2 (347 aa).

An N-terminal signal peptide occupies residues 1–24; the sequence is MLASVAGPVSLALVLLLCTRPATG. The IGFBP N-terminal domain occupies 25–96; that stretch reads QDCSAQCQCA…NRKIGVCTAK (72 aa). 6 cysteine pairs are disulfide-bonded: cysteine 27–cysteine 52, cysteine 31–cysteine 54, cysteine 33–cysteine 55, cysteine 41–cysteine 58, cysteine 66–cysteine 80, and cysteine 72–cysteine 93. Positions 99 to 165 constitute a VWFC domain; sequence APCVFGGSVY…GKCCEEWVCD (67 aa). Residues 196 to 241 enclose the TSP type-1 domain; that stretch reads NCLVQTTEWSACSKTCGMGISTRVTNDNTFCRLEKQSRLCMVRPCE. Positions 245-347 are heparin-binding; that stretch reads EENIKKGKKC…YYRKMYGDMA (103 aa). Disulfide bonds link cysteine 254-cysteine 291, cysteine 271-cysteine 305, cysteine 282-cysteine 321, cysteine 285-cysteine 323, and cysteine 290-cysteine 327. The CTCK domain occupies 254–328; the sequence is CIRTPKIAKP…KTCACHYNCP (75 aa).

It belongs to the CCN family. As to quaternary structure, monomer. Interacts with TSKU.

The protein resides in the secreted. The protein localises to the extracellular space. It is found in the extracellular matrix. In terms of biological role, major connective tissue mitoattractant secreted by vascular endothelial cells. Promotes proliferation and differentiation of chondrocytes. Is involved in the stimulation of osteoblast differentiation and has a critical role in osteogenesis. Mediates heparin- and divalent cation-dependent cell adhesion in many cell types including fibroblasts, myofibroblasts, endothelial and epithelial cells. Enhances fibroblast growth factor-induced DNA synthesis. The protein is CCN family member 2 of Rattus norvegicus (Rat).